The following is a 385-amino-acid chain: Chaperone protein DnaJ (385 aa).

Residues Asp-5–Gly-70 form the J domain. A CR-type zinc finger spans residues Gly-143–Glu-221. Residues Cys-156, Cys-159, Cys-173, Cys-176, Cys-195, Cys-198, Cys-209, and Cys-212 each coordinate Zn(2+). 4 CXXCXGXG motif repeats span residues Cys-156–Gly-163, Cys-173–Gly-180, Cys-195–Gly-202, and Cys-209–Gly-216.

It belongs to the DnaJ family. Homodimer. Zn(2+) serves as cofactor.

Its subcellular location is the cytoplasm. Participates actively in the response to hyperosmotic and heat shock by preventing the aggregation of stress-denatured proteins and by disaggregating proteins, also in an autonomous, DnaK-independent fashion. Unfolded proteins bind initially to DnaJ; upon interaction with the DnaJ-bound protein, DnaK hydrolyzes its bound ATP, resulting in the formation of a stable complex. GrpE releases ADP from DnaK; ATP binding to DnaK triggers the release of the substrate protein, thus completing the reaction cycle. Several rounds of ATP-dependent interactions between DnaJ, DnaK and GrpE are required for fully efficient folding. Also involved, together with DnaK and GrpE, in the DNA replication of plasmids through activation of initiation proteins. The sequence is that of Chaperone protein DnaJ from Parvibaculum lavamentivorans (strain DS-1 / DSM 13023 / NCIMB 13966).